The sequence spans 443 residues: Phosphatidate cytidylyltransferase 2 (443 aa).

The segment covering 1-38 (MTELRQRAVREDAPPEDKESESEAKLDGETASDSESRA) has biased composition (basic and acidic residues). Positions 1–51 (MTELRQRAVREDAPPEDKESESEAKLDGETASDSESRAETAPPPTSIDDTP) are disordered. A Phosphoserine modification is found at serine 20. Residue threonine 30 is modified to Phosphothreonine. Residues serine 32, serine 34, and serine 36 each carry the phosphoserine modification. The residue at position 50 (threonine 50) is a Phosphothreonine. 6 helical membrane passes run 78 to 98 (MIAF…MIVM), 129 to 149 (WYFL…DYFF), 165 to 185 (HRFI…LSLV), 212 to 232 (LVIH…SCVI), 261 to 281 (GFIG…YVMS), and 338 to 358 (SALS…ASGF).

This sequence belongs to the CDS family. In terms of assembly, homodimer.

Its subcellular location is the endoplasmic reticulum membrane. It carries out the reaction a 1,2-diacyl-sn-glycero-3-phosphate + CTP + H(+) = a CDP-1,2-diacyl-sn-glycerol + diphosphate. The enzyme catalyses 1-octadecanoyl-2-(5Z,8Z,11Z,14Z-eicosatetraenoyl)-sn-glycero-3-phosphate + CTP + H(+) = 1-octadecanoyl-2-(5Z,8Z,11Z,14Z-eicosatetraenoyl)-sn-glycero-3-cytidine-5'-diphosphate + diphosphate. The catalysed reaction is 1-octadecanoyl-2-(9Z,12Z-octadecadienoyl)-sn-glycero-3-phosphate + CTP + H(+) = 1-octadecanoyl-2-(9Z,12Z-octadecadienoyl)-sn-glycero-3-cytidine-5'-diphosphate + diphosphate. It catalyses the reaction 1-hexadecanoyl-2-(5Z,8Z,11Z,14Z-eicosatetraenoyl)-sn-glycero-3-phosphate + CTP + H(+) = 1-hexadecanoyl-2-(5Z,8Z,11Z,14Z-eicosatetraenoyl)-sn-glycero-3-cytidine-5'-diphosphate + diphosphate. It carries out the reaction 1,2-di-(5Z,8Z,11Z,14Z)-eicosatetraenoyl-sn-glycero-3-phosphate + CTP + H(+) = 1,2-di-(5Z,8Z,11Z,14Z-eicosatetraenoyl)-sn-glycero-3-cytidine-5'-diphosphate + diphosphate. The enzyme catalyses 1-octadecanoyl-2-(9Z-octadecenoyl)-sn-glycero-3-phosphate + CTP + H(+) = 1-octadecanoyl-2-(9Z-octadecenoyl)-sn-glycero-3-cytidine-5'-diphosphate + diphosphate. The catalysed reaction is 1-octadecanoyl-2-(4Z,7Z,10Z,13Z,16Z,19Z-docosahexaenoyl)-sn-glycero-3-phosphate + CTP + H(+) = 1-octadecanoyl-2-(4Z,7Z,10Z,13Z,16Z,19Z-docosahexaenoyl)-sn-glycero-3-cytidine-5'-diphosphate + diphosphate. It catalyses the reaction 1,2-di-(9Z,12Z-octadecadienoyl)-sn-glycero-3-phosphate + CTP + H(+) = 1,2-di-(9Z,12Z-octadecadienoyl)-sn-glycero-3-cytidine-5'-diphosphate + diphosphate. It carries out the reaction 1,2-di-(9Z-octadecenoyl)-sn-glycero-3-phosphate + CTP + H(+) = 1,2-di-(9Z-octadecenoyl)-sn-glycero-3-cytidine-5'-diphosphate + diphosphate. It functions in the pathway phospholipid metabolism; CDP-diacylglycerol biosynthesis; CDP-diacylglycerol from sn-glycerol 3-phosphate: step 3/3. Catalyzes the conversion of phosphatidic acid (PA) to CDP-diacylglycerol (CDP-DAG), an essential intermediate in the synthesis of phosphatidylglycerol, cardiolipin and phosphatidylinositol. Exhibits specificity for the nature of the acyl chains at the sn-1 and sn-2 positions in the substrate, PA and the preferred acyl chain composition is 1-stearoyl-2-arachidonoyl-sn-phosphatidic acid. Plays an important role in regulating the growth and maturation of lipid droplets which are storage organelles at the center of lipid and energy homeostasis. This Rattus norvegicus (Rat) protein is Phosphatidate cytidylyltransferase 2.